The primary structure comprises 143 residues: Transcriptional regulator MraZ (143 aa).

SpoVT-AbrB domains lie at 5–47 (TYTP…PKEE) and 76–119 (ADEQ…DAQA).

This sequence belongs to the MraZ family. Forms oligomers.

The protein resides in the cytoplasm. The protein localises to the nucleoid. The sequence is that of Transcriptional regulator MraZ from Corynebacterium glutamicum (strain R).